We begin with the raw amino-acid sequence, 305 residues long: Translation initiation factor eIF2B subunit alpha (305 aa).

Lysine 35 is subject to N6-acetyllysine.

This sequence belongs to the eIF-2B alpha/beta/delta subunits family. Component of the translation initiation factor 2B (eIF2B) complex which is a heterodecamer of two sets of five different subunits: alpha, beta, gamma, delta and epsilon. Subunits alpha, beta and delta comprise a regulatory subcomplex and subunits epsilon and gamma comprise a catalytic subcomplex. Within the complex, the hexameric regulatory complex resides at the center, with the two heterodimeric catalytic subcomplexes bound on opposite sides.

Its subcellular location is the cytoplasm. It localises to the cytosol. Its activity is regulated as follows. Activated by the chemical integrated stress response (ISR) inhibitor ISRIB which stimulates guanine nucleotide exchange factor activity for both phosphorylated and unphosphorylated eIF2. Functionally, acts as a component of the translation initiation factor 2B (eIF2B) complex, which catalyzes the exchange of GDP for GTP on eukaryotic initiation factor 2 (eIF2) gamma subunit. Its guanine nucleotide exchange factor activity is repressed when bound to eIF2 complex phosphorylated on the alpha subunit, thereby limiting the amount of methionyl-initiator methionine tRNA available to the ribosome and consequently global translation is repressed. The sequence is that of Translation initiation factor eIF2B subunit alpha (Eif2b1) from Rattus norvegicus (Rat).